Consider the following 991-residue polypeptide: Polyribonucleotide nucleotidyltransferase 2, mitochondrial (991 aa).

Residues 1 to 39 (MSSIVNRASSASLPNFLAWRALGFRTICSGRLGFAPSVP) constitute a mitochondrion transit peptide. Positions 609 to 667 (PRLATLKYSNDSLRTLIGPMGVLKRKIEVETGARLSIDNGTLTIVAKNQDVMEKAQEQV) constitute a KH domain. Positions 678-746 (GGVYKGTVSS…VRGNIKLSRK (69 aa)) constitute an S1 motif 1 domain. The segment at 813-865 (EAEKSSPVNDNDKPRRAATSKPDRKPKSTASKLIATQKEEEALESIAPEETSA) is disordered. Positions 822-838 (DNDKPRRAATSKPDRKP) are enriched in basic and acidic residues. Positions 925–987 (GTEMTATVDH…GVPVMALVDE (63 aa)) constitute an S1 motif 2 domain.

This sequence belongs to the polyribonucleotide nucleotidyltransferase family.

The protein localises to the mitochondrion. It catalyses the reaction RNA(n+1) + phosphate = RNA(n) + a ribonucleoside 5'-diphosphate. In terms of biological role, involved in the 3'-end maturation of mitochondrial mRNAs, rRNAs and tRNAs. Functions as a poly(A) mRNA 3'-5' degrading phosphorylase and is required for the degradation of highly expressed transcripts of non-coding regions. The chain is Polyribonucleotide nucleotidyltransferase 2, mitochondrial (PNP2) from Arabidopsis thaliana (Mouse-ear cress).